The sequence spans 273 residues: uncharacterized protein (273 aa).

This is an uncharacterized protein from Acheta domesticus (House cricket).